Consider the following 527-residue polypeptide: Phosphoethanolamine transferase OpgE (527 aa).

Residues 1–33 (MNLTLKESLVTRSRVFSPWTAFYFLQSLLINLG) are Periplasmic-facing. Residues 34–54 (LGYPFSLLYTAAFTAILLLLW) traverse the membrane as a helical segment. Residues 55–62 (RTLPRVQK) lie on the Cytoplasmic side of the membrane. Residues 63 to 83 (VLVGVSSLVAACYFPFAQAYG) form a helical membrane-spanning segment. Over 84–106 (APNFNTLLALHSTNMEESTEILT) the chain is Periplasmic. The chain crosses the membrane as a helical span at residues 107–127 (IFPWYSYLVGLFIFALGVIAI). The Cytoplasmic segment spans residues 128 to 146 (RRKKENEKARWNTFDSLCL). Residues 147-167 (VFSVATFFVAPVQNLAWGGVF) traverse the membrane as a helical segment. The Periplasmic segment spans residues 168 to 527 (KLKDTGYPVF…LGTDIFDPKP (360 aa)).

It belongs to the phosphoethanolamine transferase family.

It localises to the cell inner membrane. It functions in the pathway glycan metabolism; osmoregulated periplasmic glucan (OPG) biosynthesis. Catalyzes the addition of a phosphoethanolamine moiety to the osmoregulated periplasmic glucan (OPG) backbone. The polypeptide is Phosphoethanolamine transferase OpgE (opgE) (Escherichia coli (strain K12)).